A 71-amino-acid chain; its full sequence is MKEGIHPNYEVVAVTCSCGNKFETRSTLGNVLSIDVCNLCHPFYTGKQKVLDTGGRVQKFADRFGMFGTKK.

Positions 16, 18, 37, and 40 each coordinate Zn(2+).

It belongs to the bacterial ribosomal protein bL31 family. Type A subfamily. In terms of assembly, part of the 50S ribosomal subunit. Zn(2+) is required as a cofactor.

Its function is as follows. Binds the 23S rRNA. The sequence is that of Large ribosomal subunit protein bL31 from Pseudomonas putida (strain GB-1).